The primary structure comprises 129 residues: MKTAQFYVLFFCWKAIWCNGCMLTNITISVEREECEFCISINTTWCSGYCHTRDLVYKDPIRPNVQKTCTFKEFVYETVNLPGCAKQADSLYSYPVATACHCGSCDTDSTDCTVRGLGPSYCSFNERKE.

The first 20 residues, 1-20 (MKTAQFYVLFFCWKAIWCNG), serve as a signal peptide directing secretion. 6 disulfides stabilise this stretch: Cys21–Cys69, Cys35–Cys84, Cys38–Cys122, Cys46–Cys100, Cys50–Cys102, and Cys105–Cys112. Asn25 and Asn42 each carry an N-linked (GlcNAc...) asparagine glycan.

This sequence belongs to the glycoprotein hormones subunit beta family. Heterodimer. The active follitropin is a heterodimer composed of an alpha chain/CGA shared with other hormones and a unique beta chain/FSHB shown here.

It is found in the secreted. Together with the alpha chain CGA constitutes follitropin, the follicle-stimulating hormone, and provides its biological specificity to the hormone heterodimer. Binds FSHR, a G protein-coupled receptor, on target cells to activate downstream signaling pathways. Follitropin is involved in follicle development and spermatogenesis in reproductive organs. The protein is Follitropin subunit beta (FSHB) of Trichosurus vulpecula (Brush-tailed possum).